Here is a 257-residue protein sequence, read N- to C-terminus: MNPLIIKLGGVLLDSEEALERLFSALVNYRESHQRPLVIVHGGGCVVDELMKGLNLPVKKKNGLRVTPADQIDIITGALAGTANKTLLAWAKKHQIAAVGLFLGDGDSVKVTQLDEELGHVGLAQPGSPKLINSLLENGYLPVVSSIGVTDEGQLMNVNADQAATALAATLGADLILLSDVSGILDGKGQRIAEMTAAKAEQLIEQGIITDGMIVKVNAALDAARTLGRPVDIASWRHAEQLPALFNGMPMGTRILA.

Substrate-binding positions include 43–44 (GG), R65, and N157. Residues 180–185 (DVSGIL) and 208–210 (IIT) contribute to the ATP site.

It belongs to the acetylglutamate kinase family. ArgB subfamily. In terms of assembly, homodimer.

The protein resides in the cytoplasm. The catalysed reaction is N-acetyl-L-glutamate + ATP = N-acetyl-L-glutamyl 5-phosphate + ADP. Its pathway is amino-acid biosynthesis; L-arginine biosynthesis; N(2)-acetyl-L-ornithine from L-glutamate: step 2/4. In terms of biological role, catalyzes the ATP-dependent phosphorylation of N-acetyl-L-glutamate. The chain is Acetylglutamate kinase from Escherichia coli O139:H28 (strain E24377A / ETEC).